The primary structure comprises 399 residues: Carbamoyl phosphate synthase small chain (399 aa).

Residues 1 to 204 (MTKTTLSSDP…WNKGYTINNE (204 aa)) are CPSase. L-glutamine-binding residues include serine 60, glycine 256, and glycine 258. In terms of domain architecture, Glutamine amidotransferase type-1 spans 208 to 396 (HIVAIDYGIK…HDLIVNYREQ (189 aa)). Catalysis depends on cysteine 285, which acts as the Nucleophile. Positions 286, 289, 327, 329, and 330 each coordinate L-glutamine. Residues histidine 369 and glutamate 371 contribute to the active site.

Belongs to the CarA family. As to quaternary structure, composed of two chains; the small (or glutamine) chain promotes the hydrolysis of glutamine to ammonia, which is used by the large (or ammonia) chain to synthesize carbamoyl phosphate. Tetramer of heterodimers (alpha,beta)4.

The catalysed reaction is hydrogencarbonate + L-glutamine + 2 ATP + H2O = carbamoyl phosphate + L-glutamate + 2 ADP + phosphate + 2 H(+). It catalyses the reaction L-glutamine + H2O = L-glutamate + NH4(+). It participates in amino-acid biosynthesis; L-arginine biosynthesis; carbamoyl phosphate from bicarbonate: step 1/1. Its pathway is pyrimidine metabolism; UMP biosynthesis via de novo pathway; (S)-dihydroorotate from bicarbonate: step 1/3. In terms of biological role, small subunit of the glutamine-dependent carbamoyl phosphate synthetase (CPSase). CPSase catalyzes the formation of carbamoyl phosphate from the ammonia moiety of glutamine, carbonate, and phosphate donated by ATP, constituting the first step of 2 biosynthetic pathways, one leading to arginine and/or urea and the other to pyrimidine nucleotides. The small subunit (glutamine amidotransferase) binds and cleaves glutamine to supply the large subunit with the substrate ammonia. In Bartonella bacilliformis (strain ATCC 35685 / KC583 / Herrer 020/F12,63), this protein is Carbamoyl phosphate synthase small chain.